The chain runs to 235 residues: 1-(5-phosphoribosyl)-5-[(5-phosphoribosylamino)methylideneamino] imidazole-4-carboxamide isomerase (235 aa).

The Proton acceptor role is filled by D8. The active-site Proton donor is D127.

It belongs to the HisA/HisF family.

Its subcellular location is the cytoplasm. The enzyme catalyses 1-(5-phospho-beta-D-ribosyl)-5-[(5-phospho-beta-D-ribosylamino)methylideneamino]imidazole-4-carboxamide = 5-[(5-phospho-1-deoxy-D-ribulos-1-ylimino)methylamino]-1-(5-phospho-beta-D-ribosyl)imidazole-4-carboxamide. The protein operates within amino-acid biosynthesis; L-histidine biosynthesis; L-histidine from 5-phospho-alpha-D-ribose 1-diphosphate: step 4/9. The polypeptide is 1-(5-phosphoribosyl)-5-[(5-phosphoribosylamino)methylideneamino] imidazole-4-carboxamide isomerase (Nautilia profundicola (strain ATCC BAA-1463 / DSM 18972 / AmH)).